A 156-amino-acid polypeptide reads, in one-letter code: Small ribosomal subunit protein bS16 (156 aa).

Residues 114-156 form a disordered region; sequence ENEPVAEAITPKKKKAAKADEAKAEDTAADAEAPAADAEAADK. Residues 130–139 show a composition bias toward basic and acidic residues; it reads AKADEAKAED. Low complexity predominate over residues 143–156; sequence DAEAPAADAEAADK.

This sequence belongs to the bacterial ribosomal protein bS16 family.

In Rhodococcus erythropolis (strain PR4 / NBRC 100887), this protein is Small ribosomal subunit protein bS16.